The following is a 270-amino-acid chain: Electron transfer flavoprotein subunit beta (270 aa).

Belongs to the ETF alpha-subunit/FixB family. In terms of assembly, heterodimer of an alpha and a beta subunit. It depends on FAD as a cofactor.

Its function is as follows. The electron transfer flavoprotein serves as a specific electron acceptor for other dehydrogenases. It transfers the electrons to the main respiratory chain via ETF-ubiquinone oxidoreductase (ETF dehydrogenase). The sequence is that of Electron transfer flavoprotein subunit beta (etfB) from Megasphaera elsdenii.